The following is a 276-amino-acid chain: 2-dehydro-3-deoxyphosphooctonate aldolase (276 aa).

This sequence belongs to the KdsA family.

It is found in the cytoplasm. The enzyme catalyses D-arabinose 5-phosphate + phosphoenolpyruvate + H2O = 3-deoxy-alpha-D-manno-2-octulosonate-8-phosphate + phosphate. Its pathway is carbohydrate biosynthesis; 3-deoxy-D-manno-octulosonate biosynthesis; 3-deoxy-D-manno-octulosonate from D-ribulose 5-phosphate: step 2/3. The protein operates within bacterial outer membrane biogenesis; lipopolysaccharide biosynthesis. This is 2-dehydro-3-deoxyphosphooctonate aldolase from Helicobacter acinonychis (strain Sheeba).